We begin with the raw amino-acid sequence, 511 residues long: GMP synthase [glutamine-hydrolyzing] (511 aa).

The 191-residue stretch at 5-195 (IVIVLDFGGQ…LFNICGCKGD (191 aa)) folds into the Glutamine amidotransferase type-1 domain. C82 serves as the catalytic Nucleophile. Residues H169 and E171 contribute to the active site. Residues 196 to 386 (WKTSSFIEER…LGIPEKIVKR (191 aa)) form the GMPS ATP-PPase domain. Residue 223–229 (SGGVDSS) coordinates ATP.

As to quaternary structure, homodimer.

The enzyme catalyses XMP + L-glutamine + ATP + H2O = GMP + L-glutamate + AMP + diphosphate + 2 H(+). It participates in purine metabolism; GMP biosynthesis; GMP from XMP (L-Gln route): step 1/1. Functionally, catalyzes the synthesis of GMP from XMP. In Caldicellulosiruptor saccharolyticus (strain ATCC 43494 / DSM 8903 / Tp8T 6331), this protein is GMP synthase [glutamine-hydrolyzing].